A 356-amino-acid polypeptide reads, in one-letter code: Histidinol-phosphate aminotransferase (356 aa).

N6-(pyridoxal phosphate)lysine is present on lysine 214.

The protein belongs to the class-II pyridoxal-phosphate-dependent aminotransferase family. Histidinol-phosphate aminotransferase subfamily. In terms of assembly, homodimer. Pyridoxal 5'-phosphate is required as a cofactor.

The catalysed reaction is L-histidinol phosphate + 2-oxoglutarate = 3-(imidazol-4-yl)-2-oxopropyl phosphate + L-glutamate. Its pathway is amino-acid biosynthesis; L-histidine biosynthesis; L-histidine from 5-phospho-alpha-D-ribose 1-diphosphate: step 7/9. The chain is Histidinol-phosphate aminotransferase from Escherichia coli O1:K1 / APEC.